We begin with the raw amino-acid sequence, 161 residues long: ATP synthase subunit b 1 (161 aa).

A helical transmembrane segment spans residues 6 to 26 (EFYVALGFVIFVAILLYYGVH).

Belongs to the ATPase B chain family. In terms of assembly, F-type ATPases have 2 components, F(1) - the catalytic core - and F(0) - the membrane proton channel. F(1) has five subunits: alpha(3), beta(3), gamma(1), delta(1), epsilon(1). F(0) has three main subunits: a(1), b(2) and c(10-14). The alpha and beta chains form an alternating ring which encloses part of the gamma chain. F(1) is attached to F(0) by a central stalk formed by the gamma and epsilon chains, while a peripheral stalk is formed by the delta and b chains.

Its subcellular location is the cell inner membrane. Functionally, f(1)F(0) ATP synthase produces ATP from ADP in the presence of a proton or sodium gradient. F-type ATPases consist of two structural domains, F(1) containing the extramembraneous catalytic core and F(0) containing the membrane proton channel, linked together by a central stalk and a peripheral stalk. During catalysis, ATP synthesis in the catalytic domain of F(1) is coupled via a rotary mechanism of the central stalk subunits to proton translocation. Component of the F(0) channel, it forms part of the peripheral stalk, linking F(1) to F(0). This is ATP synthase subunit b 1 from Beijerinckia indica subsp. indica (strain ATCC 9039 / DSM 1715 / NCIMB 8712).